The primary structure comprises 323 residues: Methionyl-tRNA formyltransferase (323 aa).

(6S)-5,6,7,8-tetrahydrofolate is bound at residue 113-116 (SLLP).

It belongs to the Fmt family.

The catalysed reaction is L-methionyl-tRNA(fMet) + (6R)-10-formyltetrahydrofolate = N-formyl-L-methionyl-tRNA(fMet) + (6S)-5,6,7,8-tetrahydrofolate + H(+). Attaches a formyl group to the free amino group of methionyl-tRNA(fMet). The formyl group appears to play a dual role in the initiator identity of N-formylmethionyl-tRNA by promoting its recognition by IF2 and preventing the misappropriation of this tRNA by the elongation apparatus. In Porphyromonas gingivalis (strain ATCC 33277 / DSM 20709 / CIP 103683 / JCM 12257 / NCTC 11834 / 2561), this protein is Methionyl-tRNA formyltransferase.